A 276-amino-acid chain; its full sequence is Probable endonuclease 4 (276 aa).

Zn(2+) is bound by residues His-70, His-108, Glu-143, Asp-176, His-179, His-210, Asp-223, His-225, and Glu-255.

This sequence belongs to the AP endonuclease 2 family. Requires Zn(2+) as cofactor.

It catalyses the reaction Endonucleolytic cleavage to 5'-phosphooligonucleotide end-products.. Functionally, endonuclease IV plays a role in DNA repair. It cleaves phosphodiester bonds at apurinic or apyrimidinic (AP) sites, generating a 3'-hydroxyl group and a 5'-terminal sugar phosphate. The chain is Probable endonuclease 4 from Mesomycoplasma hyopneumoniae (strain J / ATCC 25934 / NCTC 10110) (Mycoplasma hyopneumoniae).